The chain runs to 296 residues: MHVPVLLEELILALEINPKGFYVDLTLGRGGHSLAILEKISNGKLVVFDKDQDALDQTRPKLLAYKQNIEIIWSDFSRFDFYLENLGIQFVDGFIIDLGVSSPQIDDPERGFSYSKDGNLDMRMDKSQKLSAFIVLNEYPYEKLVEIFFKYGQIPYAREIARAIINSRPLKTTFELVNLVKKVIPALVLVKKNFIKNVFQAVRIEVNNELDSLQKLLEKLPKFLKQGSKVAIITFHSLEDRIVKKAFLDLIRKDKLEFFQKGLPKFSMKVFRPKANELKSNPRAKSAKLRLLLKNR.

S-adenosyl-L-methionine is bound by residues 30–32 (GGH), Asp-49, Phe-76, Asp-97, and Gln-104.

Belongs to the methyltransferase superfamily. RsmH family.

The protein localises to the cytoplasm. It carries out the reaction cytidine(1402) in 16S rRNA + S-adenosyl-L-methionine = N(4)-methylcytidine(1402) in 16S rRNA + S-adenosyl-L-homocysteine + H(+). In terms of biological role, specifically methylates the N4 position of cytidine in position 1402 (C1402) of 16S rRNA. In Mesomycoplasma hyopneumoniae (strain 7448) (Mycoplasma hyopneumoniae), this protein is Ribosomal RNA small subunit methyltransferase H.